The sequence spans 427 residues: MNKSEQLFEQAQKIIPGGVNSPVRAFNGVGGTPCFIKRAQGAYIYDADDKAYIDYVGSWGPMILGHNHPAILEAVITTAKNGLSFGAPTEIEITMAEKVRELVPSMESLRMVSSGTEATMSAIRLARGYTGRDKILKFEGCYHGHADALLVKAGSGALTLGVPNSPGIPEDFAKHTLTVSYNNIDEVKEIFAKYADEIACIIVEPVAGNMNCIPPVEGFLEGLRDVCDQYSSVLIFDEVMTGFRVALGGAQAHYNIKPDLTTLGKVIGGGMPVGAFGGKQEIMDYIAPVGPVYQAGTLSGNPIAMAAGLASLTELAQGNKHQQLSSATEKLAMGLKAAAERNGVSLSVNYVGAMFGFFFTEDKNPITTYEQATQCDGEMFKRFFHLMLDEGVYLAPSSYETGFLSTSHTDDIIEKTLVAADKCFAQL.

Lys265 carries the post-translational modification N6-(pyridoxal phosphate)lysine.

The protein belongs to the class-III pyridoxal-phosphate-dependent aminotransferase family. HemL subfamily. In terms of assembly, homodimer. Pyridoxal 5'-phosphate serves as cofactor.

Its subcellular location is the cytoplasm. It catalyses the reaction (S)-4-amino-5-oxopentanoate = 5-aminolevulinate. It functions in the pathway porphyrin-containing compound metabolism; protoporphyrin-IX biosynthesis; 5-aminolevulinate from L-glutamyl-tRNA(Glu): step 2/2. The chain is Glutamate-1-semialdehyde 2,1-aminomutase from Colwellia psychrerythraea (strain 34H / ATCC BAA-681) (Vibrio psychroerythus).